The sequence spans 135 residues: MSDLALTWHNGEGDLVLGTESLLLDDSLTNAIIISLFTDLRVEGERGWWGDSYNDGFQTGSKLWTLSRAKQLPEILDDAQLYASQALQWLVDDGVAKSVQVIASNPQMSVLLLEILVVLPDGSTEQRTFRANWSL.

The protein to phage Mu protein gp46.

The polypeptide is Mu-like prophage FluMu protein gp46 (Haemophilus influenzae (strain ATCC 51907 / DSM 11121 / KW20 / Rd)).